The primary structure comprises 328 residues: Phosphate acetyltransferase (328 aa).

It belongs to the phosphate acetyltransferase and butyryltransferase family.

The protein resides in the cytoplasm. The enzyme catalyses acetyl-CoA + phosphate = acetyl phosphate + CoA. The protein operates within metabolic intermediate biosynthesis; acetyl-CoA biosynthesis; acetyl-CoA from acetate: step 2/2. The chain is Phosphate acetyltransferase (pta) from Staphylococcus aureus (strain MSSA476).